A 39-amino-acid chain; its full sequence is Bacteriocin lactococcin-G subunit alpha (39 aa).

Bacteriocin activity requires interaction of alpha and beta peptides in a molar ratio of 7:1 or 8:1 respectively.

In terms of biological role, kills Lactococci. In Lactococcus lactis subsp. lactis (Streptococcus lactis), this protein is Bacteriocin lactococcin-G subunit alpha.